An 88-amino-acid polypeptide reads, in one-letter code: Small ribosomal subunit protein bS20 (88 aa).

Residues 1-21 (MANSKSAKKRALQSEKRRQHN) are compositionally biased toward basic residues. Positions 1–26 (MANSKSAKKRALQSEKRRQHNASRSS) are disordered.

The protein belongs to the bacterial ribosomal protein bS20 family.

In terms of biological role, binds directly to 16S ribosomal RNA. The polypeptide is Small ribosomal subunit protein bS20 (Shewanella halifaxensis (strain HAW-EB4)).